Consider the following 578-residue polypeptide: Type I restriction enzyme MjaVIII methylase subunit (578 aa).

S-adenosyl-L-methionine is bound by residues 250-255 (EVYTPI), 280-282 (SGS), E303, and 332-333 (DS).

The protein belongs to the N(4)/N(6)-methyltransferase family. The type I restriction/modification system is composed of three polypeptides R, M and S.

The enzyme catalyses a 2'-deoxyadenosine in DNA + S-adenosyl-L-methionine = an N(6)-methyl-2'-deoxyadenosine in DNA + S-adenosyl-L-homocysteine + H(+). The subtype gamma methyltransferase (M) subunit of a type I restriction enzyme. The M and S subunits together form a methyltransferase (MTase) that methylates A-2 on the top and A-3 on the bottom strand of the sequence 5'-GAYN(5)GTAA-3'. In the presence of the R subunit the complex can also act as an endonuclease, binding to the same target sequence but cutting the DNA some distance from this site. Whether the DNA is cut or modified depends on the methylation state of the target sequence. When the target site is unmodified, the DNA is cut. When the target site is hemimethylated, the complex acts as a maintenance MTase modifying the DNA so that both strands become methylated. After locating a non-methylated recognition site, the enzyme complex serves as a molecular motor that translocates DNA in an ATP-dependent manner until a collision occurs that triggers cleavage. In Methanocaldococcus jannaschii (strain ATCC 43067 / DSM 2661 / JAL-1 / JCM 10045 / NBRC 100440) (Methanococcus jannaschii), this protein is Type I restriction enzyme MjaVIII methylase subunit.